Here is a 273-residue protein sequence, read N- to C-terminus: Protein FAM210A (273 aa).

The tract at residues 95–116 (VLSSSSTSQETPSEKKEEPDPL) is disordered. Basic and acidic residues predominate over residues 106-116 (PSEKKEEPDPL). Positions 118 to 230 (DKSISLYQRF…GYMSTPPPVK (113 aa)) constitute a DUF1279 domain. Residues 138–158 (LIPVHLITSGIWFGTFYYASI) form a helical membrane-spanning segment. The stretch at 233–272 (LQGRMEETKELISEKMEETKDRLTEKLQETKEKVSFKKKV) forms a coiled coil. The disordered stretch occupies residues 247 to 273 (KMEETKDRLTEKLQETKEKVSFKKKVE).

The protein belongs to the FAM210 family. Interacts with ATAD3A.

Its subcellular location is the membrane. It localises to the mitochondrion. The protein resides in the cytoplasm. Its function is as follows. May play a role in the structure and strength of both muscle and bone. This is Protein FAM210A (Fam210a) from Rattus norvegicus (Rat).